Consider the following 162-residue polypeptide: UPF0305 protein MmarC6_0221 (162 aa).

This sequence belongs to the UPF0305 family.

The protein is UPF0305 protein MmarC6_0221 of Methanococcus maripaludis (strain C6 / ATCC BAA-1332).